The following is an 817-amino-acid chain: DNA ligase (817 aa).

Residues 45–49 (DVEYD), 94–95 (SI), and Glu131 contribute to the NAD(+) site. Lys133 (N6-AMP-lysine intermediate) is an active-site residue. Arg154, Glu193, Lys311, and Lys335 together coordinate NAD(+). 4 residues coordinate Zn(2+): Cys444, Cys447, Cys462, and Cys468. Positions 733-817 (AEEGVLDGKT…LLKKPAGDQA (85 aa)) constitute a BRCT domain.

It belongs to the NAD-dependent DNA ligase family. LigA subfamily. Requires Mg(2+) as cofactor. Mn(2+) is required as a cofactor.

The catalysed reaction is NAD(+) + (deoxyribonucleotide)n-3'-hydroxyl + 5'-phospho-(deoxyribonucleotide)m = (deoxyribonucleotide)n+m + AMP + beta-nicotinamide D-nucleotide.. Its function is as follows. DNA ligase that catalyzes the formation of phosphodiester linkages between 5'-phosphoryl and 3'-hydroxyl groups in double-stranded DNA using NAD as a coenzyme and as the energy source for the reaction. It is essential for DNA replication and repair of damaged DNA. This chain is DNA ligase, found in Ralstonia pickettii (strain 12J).